We begin with the raw amino-acid sequence, 65 residues long: Large ribosomal subunit protein bL35 (65 aa).

It belongs to the bacterial ribosomal protein bL35 family.

The protein is Large ribosomal subunit protein bL35 of Rhodospirillum rubrum (strain ATCC 11170 / ATH 1.1.1 / DSM 467 / LMG 4362 / NCIMB 8255 / S1).